Reading from the N-terminus, the 268-residue chain is Protein MSS18 (268 aa).

The protein to baculovirus occlusion-derived virus envelope protein E27 (ODV-E27).

The protein localises to the mitochondrion. Its function is as follows. Involved in splicing of intron aI5-beta of the mitochondrial COX1 transcript. The chain is Protein MSS18 (MSS18) from Saccharomyces cerevisiae (strain ATCC 204508 / S288c) (Baker's yeast).